The chain runs to 956 residues: MEQTNETVQDVQDVQVAGVNEANQVTQNVEPSLISLEKSIFATHSVGRVGILLIDASNSVTFNKINDKIVFDKMVEIVKNLPESEFRCIFWNSDNNRFIDSKSSKFKNGVQVFPSVFKKETINQIFTIVKSSIDEHCLTWPHLSFNAIPDSWINNTDPINIYFITDGEMGHRNIGVEEMMSLKMNLKNSIQKIFDKFNSIRLNIITLEPIVRDFTQMESLRSAAGCDVYNVIMENQMTRYITKFTSYTPDNTNGFVHISRNIPPPGYVPFGDKYFSEIHKNEFVKYILRLVKSTSNEDDLLKIVQNLSTTVSVLTKDKPPQTIRQTVKIFSDLFQKSTLDITLVNYLLEEAVEKETSGSANIFAAYKTKLKDLYKQADELLQTNVSKAIGVNETFLSVLVGNKIISGHARMIDQDTKINGKMWKNSCIDINGVRLPVLPFDTSNQSHMNEQCLRQWMRLLVTRLYNVNTMDDMAIYSVLMMMVRVVASDIDDNVKQAYRKLATIMLKKKRANSDTTELDRLEDGQLPIPNNGKIESFYSYMTKVSANLNLHVSSMTQWYIICLALNNDKLILRQLIHCKDHIEKDFPGIKPSELFDLVKKQIEPVNFVKIPVEYSLDYQCLVTLEDVSNKGGFKFLPHNSLTGDICRPIYVLSEEGQAGLIADPNTSICPICYAQLTHKDFEKVGPKVQQEELNVFTDSSEYKNLFGLNQSIQTITSSASPVISTFTTTANPSTQGFPGFDGRNVVLNKKGTLVIMKGTVGAGKSSISLLIKQEVENNGGHCFVEGTDKYCKTGLSTVEAIQEIKLSLSKINLITDDKPIVVVIDTCGERNNGDVAFDVKFTGWNKINVFVNHIRSEMNGYLAWTLRNVLRRTKPTDSDNHFLNPESAGLKVCMDVHRNKATALFGKKIPVLFSSTPNSINEAIEKLNEAADAYQAIIDQQKPLTDQVKLVIDKIF.

Positions 918–942 (NSINEAIEKLNEAADAYQAIIDQQK) form a coiled coil.

This is an uncharacterized protein from Acanthamoeba polyphaga (Amoeba).